A 273-amino-acid polypeptide reads, in one-letter code: Trypsin-6 (273 aa).

Positions 1–22 (MLSKFTAILLAVHIALFACALT) are cleaved as a signal peptide. Positions 23–46 (QAEKRHKLTRPAFHPNAPYLAGKR) are cleaved as a propeptide — activation peptide. The Peptidase S1 domain occupies 47–272 (IVGGFVIDIS…VRDWIRETSG (226 aa)). The cysteines at positions 72 and 88 are disulfide-linked. Catalysis depends on charge relay system residues H87 and D132. 2 cysteine pairs are disulfide-bonded: C197-C213 and C224-C248. S228 serves as the catalytic Charge relay system.

Belongs to the peptidase S1 family. In terms of tissue distribution, expressed in the midgut. Expression levels drop a few hours after blood feeding and pick up again 28 hours later.

Its subcellular location is the secreted. The catalysed reaction is Preferential cleavage: Arg-|-Xaa, Lys-|-Xaa.. In terms of biological role, constitutive trypsin that is expressed 2 days after emergence, coinciding with host seeking behavior of the female. The chain is Trypsin-6 (TRYP6) from Anopheles gambiae (African malaria mosquito).